A 297-amino-acid polypeptide reads, in one-letter code: Nuclear transcription factor Y subunit B-11 (297 aa).

The interval 1-25 (MKSRKSYGHLLSPVGSPPLDNESGE) is disordered. Residues 63 to 69 (LPIANVS) mediate DNA binding. The subunit association domain (SAD) stretch occupies residues 90-101 (VQECVSEFISFV).

It belongs to the NFYB/HAP3 subunit family. Heterotrimeric transcription factor composed of three components, NF-YA, NF-YB and NF-YC. NF-YB and NF-YC must interact and dimerize for NF-YA association and DNA binding. Interacts with NFYC2, NFYC4 and NFYC6. Expressed in roots, culms, nodes, leaf blades, leaf sheaths and young panicles.

It localises to the nucleus. The protein localises to the cytoplasm. Its function is as follows. Probable transcription factor involved in the regulation of flowering time under long day (LD) conditions. Functions as a repressor of flowering, independently of HD1 and GHD7. Controls flowering time by negatively regulating the expression of EHD1 and HD3A. Regulates plant height by promoting cell elongation in the internodes. Component of the NF-Y/HAP transcription factor complex. The chain is Nuclear transcription factor Y subunit B-11 (HD5) from Oryza sativa subsp. japonica (Rice).